We begin with the raw amino-acid sequence, 74 residues long: Exodeoxyribonuclease 7 small subunit (74 aa).

The protein belongs to the XseB family. As to quaternary structure, heterooligomer composed of large and small subunits.

Its subcellular location is the cytoplasm. It catalyses the reaction Exonucleolytic cleavage in either 5'- to 3'- or 3'- to 5'-direction to yield nucleoside 5'-phosphates.. Its function is as follows. Bidirectionally degrades single-stranded DNA into large acid-insoluble oligonucleotides, which are then degraded further into small acid-soluble oligonucleotides. In Clostridium beijerinckii (strain ATCC 51743 / NCIMB 8052) (Clostridium acetobutylicum), this protein is Exodeoxyribonuclease 7 small subunit.